We begin with the raw amino-acid sequence, 223 residues long: Holliday junction branch migration complex subunit RuvA (223 aa).

Positions 1-64 (MIGRIAGVIL…EDLLQLFGFP (64 aa)) are domain I. Residues 65–143 (TLLEKEWHRL…AVMALGGALT (79 aa)) are domain II. The interval 144–169 (VDPGPLPEVELVEAAVPAPVPAKAAP) is flexible linker. The interval 170 to 223 (SSAQATADALSALGNLGYAPSEAASAVAEAAAREPAAPTAALIRAALRLLAPKE) is domain III.

Belongs to the RuvA family. As to quaternary structure, homotetramer. Forms an RuvA(8)-RuvB(12)-Holliday junction (HJ) complex. HJ DNA is sandwiched between 2 RuvA tetramers; dsDNA enters through RuvA and exits via RuvB. An RuvB hexamer assembles on each DNA strand where it exits the tetramer. Each RuvB hexamer is contacted by two RuvA subunits (via domain III) on 2 adjacent RuvB subunits; this complex drives branch migration. In the full resolvosome a probable DNA-RuvA(4)-RuvB(12)-RuvC(2) complex forms which resolves the HJ.

The protein resides in the cytoplasm. Its function is as follows. The RuvA-RuvB-RuvC complex processes Holliday junction (HJ) DNA during genetic recombination and DNA repair, while the RuvA-RuvB complex plays an important role in the rescue of blocked DNA replication forks via replication fork reversal (RFR). RuvA specifically binds to HJ cruciform DNA, conferring on it an open structure. The RuvB hexamer acts as an ATP-dependent pump, pulling dsDNA into and through the RuvAB complex. HJ branch migration allows RuvC to scan DNA until it finds its consensus sequence, where it cleaves and resolves the cruciform DNA. This is Holliday junction branch migration complex subunit RuvA from Paracoccus denitrificans (strain Pd 1222).